Consider the following 299-residue polypeptide: Acetylglutamate kinase (299 aa).

Substrate-binding positions include 72 to 73 (GG), R94, and N196.

Belongs to the acetylglutamate kinase family. ArgB subfamily.

The protein localises to the cytoplasm. It carries out the reaction N-acetyl-L-glutamate + ATP = N-acetyl-L-glutamyl 5-phosphate + ADP. Its pathway is amino-acid biosynthesis; L-arginine biosynthesis; N(2)-acetyl-L-ornithine from L-glutamate: step 2/4. Its function is as follows. Catalyzes the ATP-dependent phosphorylation of N-acetyl-L-glutamate. In Burkholderia cenocepacia (strain ATCC BAA-245 / DSM 16553 / LMG 16656 / NCTC 13227 / J2315 / CF5610) (Burkholderia cepacia (strain J2315)), this protein is Acetylglutamate kinase.